Reading from the N-terminus, the 115-residue chain is Ribonuclease P protein component (115 aa).

The protein belongs to the RnpA family. As to quaternary structure, consists of a catalytic RNA component (M1 or rnpB) and a protein subunit.

The catalysed reaction is Endonucleolytic cleavage of RNA, removing 5'-extranucleotides from tRNA precursor.. In terms of biological role, RNaseP catalyzes the removal of the 5'-leader sequence from pre-tRNA to produce the mature 5'-terminus. It can also cleave other RNA substrates such as 4.5S RNA. The protein component plays an auxiliary but essential role in vivo by binding to the 5'-leader sequence and broadening the substrate specificity of the ribozyme. In Bacillus cereus (strain 03BB102), this protein is Ribonuclease P protein component.